The primary structure comprises 61 residues: Large ribosomal subunit protein uL30 (61 aa).

It belongs to the universal ribosomal protein uL30 family. Part of the 50S ribosomal subunit.

This is Large ribosomal subunit protein uL30 from Oenococcus oeni (strain ATCC BAA-331 / PSU-1).